Here is a 161-residue protein sequence, read N- to C-terminus: Phosphopantetheine adenylyltransferase (161 aa).

Ser9 contributes to the substrate binding site. ATP-binding positions include 9 to 10 (SF) and His17. Residues Lys41, Leu73, and Arg87 each coordinate substrate. ATP is bound by residues 88–90 (GLR), Glu98, and 123–129 (YTFISSS).

The protein belongs to the bacterial CoaD family. Homohexamer. The cofactor is Mg(2+).

It localises to the cytoplasm. The enzyme catalyses (R)-4'-phosphopantetheine + ATP + H(+) = 3'-dephospho-CoA + diphosphate. It functions in the pathway cofactor biosynthesis; coenzyme A biosynthesis; CoA from (R)-pantothenate: step 4/5. In terms of biological role, reversibly transfers an adenylyl group from ATP to 4'-phosphopantetheine, yielding dephospho-CoA (dPCoA) and pyrophosphate. This Syntrophomonas wolfei subsp. wolfei (strain DSM 2245B / Goettingen) protein is Phosphopantetheine adenylyltransferase.